A 228-amino-acid chain; its full sequence is Phosphoglycolate phosphatase (228 aa).

Asp-9 functions as the Nucleophile in the catalytic mechanism. Mg(2+)-binding residues include Asp-9 and Asp-11. Lys-151 contacts substrate. Residues Asp-174 and Asp-178 each coordinate Mg(2+).

This sequence belongs to the archaeal SPP-like hydrolase family. It depends on Mg(2+) as a cofactor.

It catalyses the reaction 2-phosphoglycolate + H2O = glycolate + phosphate. In terms of biological role, catalyzes the dephosphorylation of 2-phosphoglycolate. This is Phosphoglycolate phosphatase from Pyrobaculum islandicum (strain DSM 4184 / JCM 9189 / GEO3).